Reading from the N-terminus, the 153-residue chain is Small ribosomal subunit protein uS9 (153 aa).

Residues 1–19 show a composition bias toward low complexity; that stretch reads MTAPADEAPAVEDAPVAED. 2 disordered regions span residues 1–23 and 121–153; these read MTAP…IAPV and LKKA…YSKR. Basic and acidic residues predominate over residues 129 to 138; sequence RDSREKERKK. Residues 139-153 show a composition bias toward basic residues; it reads YGLKKARKAPQYSKR.

The protein belongs to the universal ribosomal protein uS9 family.

The sequence is that of Small ribosomal subunit protein uS9 from Saccharopolyspora erythraea (strain ATCC 11635 / DSM 40517 / JCM 4748 / NBRC 13426 / NCIMB 8594 / NRRL 2338).